The primary structure comprises 213 residues: Probable glutathione S-transferase DHAR1, cytosolic (213 aa).

2 residues coordinate glutathione: K8 and D19. L-ascorbate contacts are provided by K8 and D19. The 80-residue stretch at 10-89 (AVGHPDTLGD…VIEEKYPTPS (80 aa)) folds into the GST N-terminal domain. Catalysis depends on C20, which acts as the Nucleophile. Glutathione is bound by residues K47, V60, S74, H160, and W207. The region spanning 73 to 213 (DSDVITQVIE…IAGWAPKVNA (141 aa)) is the GST C-terminal domain. K210 contributes to the L-ascorbate binding site.

It belongs to the GST superfamily. DHAR family. Monomer.

Its subcellular location is the cytoplasm. It is found in the cytosol. It carries out the reaction RX + glutathione = an S-substituted glutathione + a halide anion + H(+). The catalysed reaction is L-dehydroascorbate + 2 glutathione = glutathione disulfide + L-ascorbate. Its function is as follows. Involved in ascorbate homeostasis. Maintains redox pools of ascorbate by recycling dihydroascorbate (DHA) to ascorbate. Involved in scavenging reactive oxygen species (ROS) under oxidative stresses. Possesses dehydroascorbate reductase (DHAR) activity in vitro. May function via a ping-pong reaction mechanism with an electron transfer at the active site. Possesses chaperone-like activity in vitro. The protein is Probable glutathione S-transferase DHAR1, cytosolic of Oryza sativa subsp. japonica (Rice).